The chain runs to 1098 residues: Probable DNA-directed RNA polymerase (1098 aa).

The segment covering 1-24 has biased composition (basic and acidic residues); the sequence is PIRESVRVSTDRDPDLEDEKREQL. Residues 1–26 are disordered; that stretch reads PIRESVRVSTDRDPDLEDEKREQLGE. Active-site residues include Asp-663, Lys-750, and Asp-915.

Belongs to the phage and mitochondrial RNA polymerase family.

The protein resides in the mitochondrion. It catalyses the reaction RNA(n) + a ribonucleoside 5'-triphosphate = RNA(n+1) + diphosphate. In terms of biological role, DNA-dependent RNA polymerase catalyzes the transcription of DNA into RNA using the four ribonucleoside triphosphates as substrates. The protein is Probable DNA-directed RNA polymerase of Zea mays (Maize).